Here is a 365-residue protein sequence, read N- to C-terminus: Outer membrane protein assembly factor BamC (365 aa).

Residues 1–19 (MKHNRLAIAALAPVLILVG) form the signal peptide. Cys20 carries the N-palmitoyl cysteine lipid modification. Cys20 is lipidated: S-diacylglycerol cysteine.

The protein belongs to the BamC family. Part of the Bam complex.

Its subcellular location is the cell outer membrane. Part of the outer membrane protein assembly complex, which is involved in assembly and insertion of beta-barrel proteins into the outer membrane. This is Outer membrane protein assembly factor BamC from Ferrimonas balearica (strain DSM 9799 / CCM 4581 / KCTC 23876 / PAT).